The chain runs to 721 residues: Phosphoribosylformylglycinamidine synthase subunit PurL (721 aa).

H47 is an active-site residue. Residues Y50 and K89 each coordinate ATP. E91 contacts Mg(2+). Substrate-binding positions include 92 to 95 (SHNH) and R114. The active-site Proton acceptor is H93. D115 is a binding site for Mg(2+). Q238 provides a ligand contact to substrate. Position 266 (D266) interacts with Mg(2+). A substrate-binding site is contributed by 310 to 312 (ESQ). Positions 490 and 527 each coordinate ATP. Residue N528 participates in Mg(2+) binding. S530 provides a ligand contact to substrate.

It belongs to the FGAMS family. Monomer. Part of the FGAM synthase complex composed of 1 PurL, 1 PurQ and 2 PurS subunits.

It localises to the cytoplasm. The enzyme catalyses N(2)-formyl-N(1)-(5-phospho-beta-D-ribosyl)glycinamide + L-glutamine + ATP + H2O = 2-formamido-N(1)-(5-O-phospho-beta-D-ribosyl)acetamidine + L-glutamate + ADP + phosphate + H(+). The protein operates within purine metabolism; IMP biosynthesis via de novo pathway; 5-amino-1-(5-phospho-D-ribosyl)imidazole from N(2)-formyl-N(1)-(5-phospho-D-ribosyl)glycinamide: step 1/2. Its function is as follows. Part of the phosphoribosylformylglycinamidine synthase complex involved in the purines biosynthetic pathway. Catalyzes the ATP-dependent conversion of formylglycinamide ribonucleotide (FGAR) and glutamine to yield formylglycinamidine ribonucleotide (FGAM) and glutamate. The FGAM synthase complex is composed of three subunits. PurQ produces an ammonia molecule by converting glutamine to glutamate. PurL transfers the ammonia molecule to FGAR to form FGAM in an ATP-dependent manner. PurS interacts with PurQ and PurL and is thought to assist in the transfer of the ammonia molecule from PurQ to PurL. This Ruegeria sp. (strain TM1040) (Silicibacter sp.) protein is Phosphoribosylformylglycinamidine synthase subunit PurL.